The chain runs to 88 residues: MRLFLSLPVLVVVLAMVLEGPAPTQAAPEISSTLGRIPDKLKEFGNTLEDKARAAIESMKQSDIPAKTRNWFSETFNKVKEQLKTAFS.

An N-terminal signal peptide occupies residues 1-26 (MRLFLSLPVLVVVLAMVLEGPAPTQA).

It belongs to the apolipoprotein C1 family.

The protein localises to the secreted. Inhibitor of lipoprotein binding to the low density lipoprotein (LDL) receptor, LDL receptor-related protein, and very low density lipoprotein (VLDL) receptor. Associates with high density lipoproteins (HDL) and the triacylglycerol-rich lipoproteins in the plasma and makes up about 10% of the protein of the VLDL and 2% of that of HDL. Appears to interfere directly with fatty acid uptake and is also the major plasma inhibitor of cholesteryl ester transfer protein (CETP). Binds free fatty acids and reduces their intracellular esterification. Modulates the interaction of APOE with beta-migrating VLDL and inhibits binding of beta-VLDL to the LDL receptor-related protein. In Phoca vitulina (Harbor seal), this protein is Apolipoprotein C-I (APOC1).